A 207-amino-acid polypeptide reads, in one-letter code: N-(5'-phosphoribosyl)anthranilate isomerase (207 aa).

It belongs to the TrpF family.

It carries out the reaction N-(5-phospho-beta-D-ribosyl)anthranilate = 1-(2-carboxyphenylamino)-1-deoxy-D-ribulose 5-phosphate. The protein operates within amino-acid biosynthesis; L-tryptophan biosynthesis; L-tryptophan from chorismate: step 3/5. The polypeptide is N-(5'-phosphoribosyl)anthranilate isomerase (Stutzerimonas stutzeri (strain A1501) (Pseudomonas stutzeri)).